Here is a 275-residue protein sequence, read N- to C-terminus: C-type lectin domain family 12 member B (275 aa).

Residues 1 to 41 (MSDEVTYATLMLQDSARVRGNQDGNNLRKEGHPAQSSLWRG) are Cytoplasmic-facing. Residues 5–10 (VTYATL) carry the ITIM motif motif. Tyr7 carries the post-translational modification Phosphotyrosine. A helical; Signal-anchor for type II membrane protein membrane pass occupies residues 42 to 64 (AALSLMTLCLVLVTGLVTLATMF). Residues 65–275 (LQVSNDINSD…ASLVKTEDLD (211 aa)) lie on the Extracellular side of the membrane. Residues Asn91, Asn175, and Asn236 are each glycosylated (N-linked (GlcNAc...) asparagine). One can recognise a C-type lectin domain in the interval 149-263 (YGNSCYYFSI…CSAEIPWICE (115 aa)). Intrachain disulfides connect Cys171–Cys262 and Cys241–Cys254.

In terms of assembly, homodimer. Interacts (via ITIM motif) with PTPN6. Interacts (via ITIM motif) with PTPN11; this interaction triggers dephosphorylation and activation of PTPN11.

The protein resides in the cell membrane. Its function is as follows. Inhibitory receptor postulated to negatively regulate immune and non-immune functions. Upon phosphorylation, recruits SH2 domain-containing PTPN6 and PTPN11 phosphatases to its ITIM motif and antagonizes activation signals. Although it inhibits KLRK1/NKG2D-mediated signaling, it does not bind known ligands of KLRK1/NKG2D and therefore is not its inhibitory counterpart. May limit activation of myeloid cell subsets in response to infection or tissue inflammation. May protect target cells against natural killer cell-mediated lysis. May negatively regulate cell cycle and differentiation of melanocytes via inactivation of STAT3. The protein is C-type lectin domain family 12 member B (Clec12b) of Mus musculus (Mouse).